The sequence spans 551 residues: Vacuolar protein sorting-associated protein 17 (551 aa).

The tract at residues 1–100 (MTSAVPYDPY…SERVILPERS (100 aa)) is disordered. Polar residues-rich tracts occupy residues 29-39 (AATTTDGSSSM) and 46-64 (TEQT…NIQN). Positions 108–227 (LLAKVTGLER…FFIESDFNTY (120 aa)) constitute a PX domain. A coiled-coil region spans residues 359–385 (IMRNLVQAQQNSKAKQEQARRFRSRRD). Residues 474-504 (RLGRHAVSNNNSDTSQTLKGDSWTGESNRKS) form a disordered region. Over residues 480-504 (VSNNNSDTSQTLKGDSWTGESNRKS) the composition is skewed to polar residues. Serine 544 carries the post-translational modification Phosphoserine.

It belongs to the VPS17 family. In terms of assembly, component of the retromer complex which consists of VPS29, VPS26, VPS35, VPS5 and VPS17. Component of a retromer subcomplex consisting of VPS5 and VPS17. In terms of processing, phosphorylated on one or more serine residues.

Its subcellular location is the endomembrane system. Its function is as follows. Component of the membrane-associated retromer complex which is essential in endosome-to-Golgi retrograde transport. The VPS5-VPS17 subcomplex may assemble onto the membrane to promote vesicle formation and is required for recycling the vacuolar protein-sorting receptor. Required for the sorting and delivery of a subset of soluble vacuolar hydrolases. Required for retention of late Golgi membrane proteins and vacuolar biogenesis. Involved in vacuolar fragmentation during hyperosmotic stress. The chain is Vacuolar protein sorting-associated protein 17 from Saccharomyces cerevisiae (strain ATCC 204508 / S288c) (Baker's yeast).